Consider the following 95-residue polypeptide: Small ribosomal subunit protein bS6 (95 aa).

It belongs to the bacterial ribosomal protein bS6 family.

Binds together with bS18 to 16S ribosomal RNA. The protein is Small ribosomal subunit protein bS6 of Onion yellows phytoplasma (strain OY-M).